Reading from the N-terminus, the 624-residue chain is Interleukin-1 receptor-associated kinase-like 2 (624 aa).

Positions 13–94 (LDDLCRNIDT…RAAQIVLSWK (82 aa)) constitute a Death domain. A Protein kinase domain is found at 210 to 475 (FDQSHRISEG…LPEACAETWA (266 aa)). ATP is bound by residues 216–224 (ISEGTFADI), Lys237, and 337–340 (KSAN). Disordered regions lie at residues 508 to 536 (SLPWSRVSEDTGSSSNTPEETDDVDNSSL) and 549 to 593 (RVSS…ETSW). The span at 558–577 (GNGTAQPSTSGRQEADSSSE) shows a compositional bias: polar residues.

It belongs to the protein kinase superfamily. TKL Ser/Thr protein kinase family. Pelle subfamily. Interacts with MYD88. IL-1 stimulation leads to the formation of a signaling complex which dissociates from the IL-1 receptor following the binding of PELI1.

Binds to the IL-1 type I receptor following IL-1 engagement, triggering intracellular signaling cascades leading to transcriptional up-regulation and mRNA stabilization. This is Interleukin-1 receptor-associated kinase-like 2 (Irak2) from Rattus norvegicus (Rat).